The chain runs to 1038 residues: Isoleucine--tRNA ligase (1038 aa).

A 'HIGH' region motif is present at residues 48 to 58 (PTANGKPHVGH). A 'KMSKS' region motif is present at residues 590 to 594 (KMSKS). ATP is bound at residue lysine 593.

Belongs to the class-I aminoacyl-tRNA synthetase family. IleS type 2 subfamily. As to quaternary structure, monomer. Requires Zn(2+) as cofactor.

The protein resides in the cytoplasm. It carries out the reaction tRNA(Ile) + L-isoleucine + ATP = L-isoleucyl-tRNA(Ile) + AMP + diphosphate. Functionally, catalyzes the attachment of isoleucine to tRNA(Ile). As IleRS can inadvertently accommodate and process structurally similar amino acids such as valine, to avoid such errors it has two additional distinct tRNA(Ile)-dependent editing activities. One activity is designated as 'pretransfer' editing and involves the hydrolysis of activated Val-AMP. The other activity is designated 'posttransfer' editing and involves deacylation of mischarged Val-tRNA(Ile). The polypeptide is Isoleucine--tRNA ligase (Clostridium novyi (strain NT)).